Reading from the N-terminus, the 187-residue chain is MALKDTFKNLFNYFEVDEVNEVEEQADAYSMPNDRPKMRVANTTVAPVREQQPKVETRREARSESQLQRLHERQQELMTNNNEKEIVKTTIDIKFPKRYEDAPEMVNLLLDNASILIDFQYMSEQQARRCLDYLDGARSVLSGNLKKVSNTMWLLTPVNVTVNIEELRNAGTTTGVADSNFEFDIKR.

The protein belongs to the SepF family. As to quaternary structure, homodimer. Interacts with FtsZ.

The protein localises to the cytoplasm. Cell division protein that is part of the divisome complex and is recruited early to the Z-ring. Probably stimulates Z-ring formation, perhaps through the cross-linking of FtsZ protofilaments. Its function overlaps with FtsA. This chain is Cell division protein SepF, found in Streptococcus suis (strain 98HAH33).